We begin with the raw amino-acid sequence, 188 residues long: Elongation factor P (188 aa).

The interval 139 to 163 is disordered; the sequence is PVTKGQTASSSYKPATLSNGVRTQV. Residues 142–160 are compositionally biased toward polar residues; that stretch reads KGQTASSSYKPATLSNGVR.

Belongs to the elongation factor P family.

Its subcellular location is the cytoplasm. Its pathway is protein biosynthesis; polypeptide chain elongation. Its function is as follows. Involved in peptide bond synthesis. Stimulates efficient translation and peptide-bond synthesis on native or reconstituted 70S ribosomes in vitro. Probably functions indirectly by altering the affinity of the ribosome for aminoacyl-tRNA, thus increasing their reactivity as acceptors for peptidyl transferase. This is Elongation factor P from Methylobacterium nodulans (strain LMG 21967 / CNCM I-2342 / ORS 2060).